Consider the following 440-residue polypeptide: uncharacterized protein (440 aa).

A signal peptide spans 1-19; the sequence is MKKLLLAASIVYFASACLA.

This is an uncharacterized protein from Rickettsia prowazekii (strain Madrid E).